The chain runs to 226 residues: Probable N-acetyl-alpha-D-glucosaminyl L-malate deacetylase 2 (226 aa).

Residues H13, D16, and H127 each contribute to the Zn(2+) site.

The protein belongs to the PIGL family. It depends on Zn(2+) as a cofactor.

The enzyme catalyses (S)-malyl N-acetyl-alpha-D-glucosaminide + H2O = (S)-malyl alpha-D-glucosaminide + acetate. Its function is as follows. Involved in bacillithiol (BSH) biosynthesis. Catalyzes the second step of the pathway, the deacetylation of N-acetylglucosaminylmalate (GlcNAc-Mal) to glucosamine malate (GlcN-Mal). Could also be involved in bacillithiol-detoxifying pathways through formation of S-mercapturic adducts. This chain is Probable N-acetyl-alpha-D-glucosaminyl L-malate deacetylase 2, found in Bacillus anthracis.